A 586-amino-acid chain; its full sequence is Chaperonin 60 subunit alpha 1, chloroplastic (586 aa).

The N-terminal 46 residues, 1–46 (MASANALSSASVLCSSRQSKLGGGNQQQGQRVSYNKRTIRRFSVRA), are a transit peptide targeting the chloroplast. Serine 90 carries the post-translational modification Phosphoserine.

It belongs to the chaperonin (HSP60) family. Part of the Cpn60 complex composed of 7 alpha and 7 beta subunits. This complex shows ATPase activity. The Cpn60 complex interacts with the Cpn10 complex. In terms of tissue distribution, expressed in leaves, stems, siliques and flowers.

The protein resides in the plastid. It is found in the chloroplast. Binds RuBisCO small and large subunits and is implicated in the assembly of the enzyme oligomer. Involved in protein assisted folding. Required for proper chloroplast development. This is Chaperonin 60 subunit alpha 1, chloroplastic (CPN60A1) from Arabidopsis thaliana (Mouse-ear cress).